Consider the following 165-residue polypeptide: Small ribosomal subunit protein uS17m (165 aa).

This sequence belongs to the universal ribosomal protein uS17 family. As to quaternary structure, component of the mitochondrial small ribosomal subunit (mt-SSU). Mature N.crassa 74S mitochondrial ribosomes consist of a small (37S) and a large (54S) subunit. The 37S small subunit contains a 16S ribosomal RNA (16S mt-rRNA) and 32 different proteins. The 54S large subunit contains a 23S rRNA (23S mt-rRNA) and 42 different proteins. uS17m interacts with the F(1)-ATPase inhibitor IF(1) dimer.

Its subcellular location is the mitochondrion. Functionally, component of the mitochondrial ribosome (mitoribosome), a dedicated translation machinery responsible for the synthesis of mitochondrial genome-encoded proteins, including at least some of the essential transmembrane subunits of the mitochondrial respiratory chain. The mitoribosomes are attached to the mitochondrial inner membrane and translation products are cotranslationally integrated into the membrane. The polypeptide is Small ribosomal subunit protein uS17m (mrps17) (Neurospora crassa (strain ATCC 24698 / 74-OR23-1A / CBS 708.71 / DSM 1257 / FGSC 987)).